A 366-amino-acid chain; its full sequence is MSGNTLGTLFTVTTFGESHGPAIGCVIDGCPPGMGLTEADIQIELDRRKPGTSRHVTQRQEADEVEILSGVFEGVTTGTPIALLIRNTDQRSKDYGNIVETFRPGHADYTYWQKYGIRDYRGGGRSSARLTAPIVGAGAVAKKWLRERFGVEVRGYMSGLGEIDVPFVDWSYVHENPFFSPNAAVVPELEAYMDALRNDGDSIGARIDVVASGVPVGWGEPVFDRLDADIAKAMMSINAVKGVEIGAGFDSVAQRGSVHGDELTPAGFVGNHAGGVLGGISTGQDITVSIAIKPTSSIRTPRRSITKSGDEATVETFGRHDPCVGIRATPIAESMLALVLIDHALRHRAQCGDVETSTPKIAGSAT.

Arginine 48 and arginine 54 together coordinate NADP(+). Residues 125-127 (RSS), 238-239 (NA), glycine 278, 293-297 (KPTSS), and arginine 319 each bind FMN.

It belongs to the chorismate synthase family. As to quaternary structure, homotetramer. It depends on FMNH2 as a cofactor.

It catalyses the reaction 5-O-(1-carboxyvinyl)-3-phosphoshikimate = chorismate + phosphate. It functions in the pathway metabolic intermediate biosynthesis; chorismate biosynthesis; chorismate from D-erythrose 4-phosphate and phosphoenolpyruvate: step 7/7. Functionally, catalyzes the anti-1,4-elimination of the C-3 phosphate and the C-6 proR hydrogen from 5-enolpyruvylshikimate-3-phosphate (EPSP) to yield chorismate, which is the branch point compound that serves as the starting substrate for the three terminal pathways of aromatic amino acid biosynthesis. This reaction introduces a second double bond into the aromatic ring system. The protein is Chorismate synthase of Burkholderia orbicola (strain MC0-3).